We begin with the raw amino-acid sequence, 833 residues long: MHLLPRETDKLIVTTLGTLAQRRLARGLILNRAETIALISSQLQEFIRDGRHSVAELMDLGKKMLGRRHVRKGVPESIHTIQVEGTFPDGVFLVTVDDPISSDDGDLNNAFYGSFLPIPSADVFPAAPEPADTLLGALICRKEPIKINASRRRFKLEVKNAGDRPIQVGSHYHFLETNPALIFDRLLSYGYHLDIPAGTAVRFEPGEKKTVTMVEFGGKKIFHGGSGLASGSFDENLRETKVKEMVEKGGFGHKDQEKVEEGPTTEMNREVYASMFGPTTGDKIKLADMDLWIEVEKDYTVYGEECKFGGGKVLRDGGGQASGRHEHEVLDLVITNALIVDWNGIYKADIGVKNGIIVGIGKAGNPDMMDGVTDGMIVGSSTEVIAGEKLIITAGALDVHVHYICPQLMTEALASGITTVVGGGTGPADGSNATTCTSSSFYMQNMIKATDTVPLNFGFTGKGNDSGTNALRDVIEAGACGLKVHEDWGATPEVIDRALSIADEYDVQVNLHSDTLNESGYVESTLAAIKGRTIHSYHTEGAGGGHAPDIIVVCEYENVLPSSTNPTRPYAVNTLDEHLDMLMVCHHLDKSIPEDIAFADSRIRSETVAAEDVLQDTGAISMISSDCQAMGRIGEVITRTWRTAAKMKQFRGPLEGDEPTRDNNRVKRYVAKYTINPAITHGMSHLIGQVAVGCLADLVFWTAESFGARPEMILKGGVIAWAAMGDANASIPTVQPVIGRPMWGSQPEAAALNSIVWVSQASLDKDLVKRFNIKKRAEAVKNCRAIGKKDMKWNDSMPKMTVDPETYDVHADGVLCDVPPADKLPLTKRYFVY.

One can recognise a Urease domain in the interval 395–833; the sequence is GALDVHVHYI…LPLTKRYFVY (439 aa). 2 residues coordinate Ni(2+): His400 and His402. Residues His402 and Ala433 each contribute to the urea site. Residue Lys483 coordinates Ni(2+). The residue at position 483 (Lys483) is an N6-carboxylysine. 2 residues coordinate urea: His485 and His512. His512 and His538 together coordinate Ni(2+). His586 acts as the Proton donor in catalysis. Residue Asp626 coordinates Ni(2+). Ala629 contributes to the urea binding site.

It in the C-terminal section; belongs to the metallo-dependent hydrolases superfamily. Urease alpha subunit family. As to quaternary structure, homohexamer. Ni(2+) serves as cofactor. In terms of processing, carboxylation allows a single lysine to coordinate two nickel ions.

It catalyses the reaction urea + 2 H2O + H(+) = hydrogencarbonate + 2 NH4(+). The protein operates within nitrogen metabolism; urea degradation; CO(2) and NH(3) from urea (urease route): step 1/1. Its activity is regulated as follows. The urease accessory proteins URE4, URE6 and URE7 are required for urease activity, URE7 supplying nickel for the functional urease. Plays a nutritional role via nitrogen acquisition in the environment. Contributes to the central nervous system invasion by enhancing yeast sequestration within microcapillary beds (such as within the brain) during hematogenous spread, thereby facilitating blood-to-brain invasion by C.neoformans. Affects fitness within the mammalian phagosome, promoting non-lytic exocytosis while delaying intracellular replication and thus reducing phagolysosomal membrane damage, events that could facilitate cryptococcal dissemination when transported inside macrophages. Urease activity is also associated with the regulation of key intracellular metabolic pathways, including melanin biosynthesis, polyamine biosynthesis, as well as intracellular levels of proline and reactive oxygen species. This Cryptococcus neoformans var. neoformans serotype D (strain B-3501A) (Filobasidiella neoformans) protein is Urease.